We begin with the raw amino-acid sequence, 196 residues long: Dimiconin (196 aa).

Residues 1 to 21 (MKTIIVVTIFGILTCAYPTDG) form the signal peptide. Residues N62 and N187 are each glycosylated (N-linked (GlcNAc...) asparagine).

Belongs to the calycin superfamily. Triabin family. As to expression, salivary gland.

It localises to the secreted. Inhibits the intrinsic blood coagulation pathway by blocking the activation of host coagulation factor XII (F12) but not the enzymatic activity of activated F12. The sequence is that of Dimiconin from Triatoma dimidiata (Kissing bug).